Reading from the N-terminus, the 308-residue chain is Ribosomal RNA small subunit methyltransferase H (308 aa).

Residues 33–35 (GGY), D51, F82, D96, and Q103 each bind S-adenosyl-L-methionine.

Belongs to the methyltransferase superfamily. RsmH family.

The protein localises to the cytoplasm. The catalysed reaction is cytidine(1402) in 16S rRNA + S-adenosyl-L-methionine = N(4)-methylcytidine(1402) in 16S rRNA + S-adenosyl-L-homocysteine + H(+). Its function is as follows. Specifically methylates the N4 position of cytidine in position 1402 (C1402) of 16S rRNA. The sequence is that of Ribosomal RNA small subunit methyltransferase H from Rickettsia canadensis (strain McKiel).